The sequence spans 895 residues: Alanine--tRNA ligase (895 aa).

Residues histidine 586, histidine 590, cysteine 690, and histidine 694 each contribute to the Zn(2+) site.

This sequence belongs to the class-II aminoacyl-tRNA synthetase family. Zn(2+) is required as a cofactor.

Its subcellular location is the cytoplasm. It catalyses the reaction tRNA(Ala) + L-alanine + ATP = L-alanyl-tRNA(Ala) + AMP + diphosphate. Functionally, catalyzes the attachment of alanine to tRNA(Ala) in a two-step reaction: alanine is first activated by ATP to form Ala-AMP and then transferred to the acceptor end of tRNA(Ala). Also edits incorrectly charged Ser-tRNA(Ala) and Gly-tRNA(Ala) via its editing domain. The sequence is that of Alanine--tRNA ligase from Korarchaeum cryptofilum (strain OPF8).